A 151-amino-acid polypeptide reads, in one-letter code: Deoxyuridine 5'-triphosphate nucleotidohydrolase (151 aa).

Substrate is bound by residues 69–71 (RSG), Asn-82, and 86–88 (TID).

The protein belongs to the dUTPase family. It depends on Mg(2+) as a cofactor.

The catalysed reaction is dUTP + H2O = dUMP + diphosphate + H(+). The protein operates within pyrimidine metabolism; dUMP biosynthesis; dUMP from dCTP (dUTP route): step 2/2. In terms of biological role, this enzyme is involved in nucleotide metabolism: it produces dUMP, the immediate precursor of thymidine nucleotides and it decreases the intracellular concentration of dUTP so that uracil cannot be incorporated into DNA. This chain is Deoxyuridine 5'-triphosphate nucleotidohydrolase, found in Rhodospirillum centenum (strain ATCC 51521 / SW).